The primary structure comprises 299 residues: tRNA dimethylallyltransferase (299 aa).

10 to 17 provides a ligand contact to ATP; the sequence is GPTAVGKT. 12 to 17 is a substrate binding site; the sequence is TAVGKT. Residues 35 to 38 are interaction with substrate tRNA; it reads DSQQ.

The protein belongs to the IPP transferase family. Monomer. It depends on Mg(2+) as a cofactor.

It carries out the reaction adenosine(37) in tRNA + dimethylallyl diphosphate = N(6)-dimethylallyladenosine(37) in tRNA + diphosphate. In terms of biological role, catalyzes the transfer of a dimethylallyl group onto the adenine at position 37 in tRNAs that read codons beginning with uridine, leading to the formation of N6-(dimethylallyl)adenosine (i(6)A). This Streptococcus thermophilus (strain ATCC BAA-250 / LMG 18311) protein is tRNA dimethylallyltransferase.